Reading from the N-terminus, the 104-residue chain is Large ribosomal subunit protein uL23 (104 aa).

The protein belongs to the universal ribosomal protein uL23 family. As to quaternary structure, part of the 50S ribosomal subunit. Contacts protein L29, and trigger factor when it is bound to the ribosome.

In terms of biological role, one of the early assembly proteins it binds 23S rRNA. One of the proteins that surrounds the polypeptide exit tunnel on the outside of the ribosome. Forms the main docking site for trigger factor binding to the ribosome. The chain is Large ribosomal subunit protein uL23 from Paraburkholderia phymatum (strain DSM 17167 / CIP 108236 / LMG 21445 / STM815) (Burkholderia phymatum).